A 314-amino-acid chain; its full sequence is Formimidoylglutamase (314 aa).

Mn(2+) contacts are provided by histidine 127, aspartate 153, histidine 155, aspartate 157, aspartate 245, and aspartate 247.

It belongs to the arginase family. It depends on Mn(2+) as a cofactor.

The enzyme catalyses N-formimidoyl-L-glutamate + H2O = formamide + L-glutamate. Its pathway is amino-acid degradation; L-histidine degradation into L-glutamate; L-glutamate from N-formimidoyl-L-glutamate (hydrolase route): step 1/1. In terms of biological role, catalyzes the conversion of N-formimidoyl-L-glutamate to L-glutamate and formamide. This chain is Formimidoylglutamase, found in Aeromonas salmonicida (strain A449).